A 151-amino-acid polypeptide reads, in one-letter code: MRKAIFPGSFDPLTLGHSDIIKRSIPLFDEIIIAIGVNAEKKYMFSLEDRKRFIKETFKDEPSVSVISYEGLTIDLCKKLGADFILRGLRNPADFEFEKAIAHTNRRLSKIETIFLLTAASTSFISSSIVRDVIRNGGDYSVLVPEAVRVK.

A substrate-binding site is contributed by S9. Residues S9 to F10 and H17 contribute to the ATP site. K41, T73, and R87 together coordinate substrate. Residues G88–R90, E98, and T122–S128 contribute to the ATP site.

This sequence belongs to the bacterial CoaD family. Homohexamer. Mg(2+) serves as cofactor.

The protein resides in the cytoplasm. It catalyses the reaction (R)-4'-phosphopantetheine + ATP + H(+) = 3'-dephospho-CoA + diphosphate. It functions in the pathway cofactor biosynthesis; coenzyme A biosynthesis; CoA from (R)-pantothenate: step 4/5. Its function is as follows. Reversibly transfers an adenylyl group from ATP to 4'-phosphopantetheine, yielding dephospho-CoA (dPCoA) and pyrophosphate. This is Phosphopantetheine adenylyltransferase from Flavobacterium psychrophilum (strain ATCC 49511 / DSM 21280 / CIP 103535 / JIP02/86).